The chain runs to 157 residues: Ribonuclease H (157 aa).

Residues 5–146 (IMKQVEIFTD…CDDLARTAAE (142 aa)) enclose the RNase H type-1 domain. 4 residues coordinate Mg(2+): Asp-14, Glu-52, Asp-74, and Asp-138.

It belongs to the RNase H family. As to quaternary structure, monomer. Mg(2+) serves as cofactor.

Its subcellular location is the cytoplasm. It carries out the reaction Endonucleolytic cleavage to 5'-phosphomonoester.. In terms of biological role, endonuclease that specifically degrades the RNA of RNA-DNA hybrids. The protein is Ribonuclease H of Aliivibrio salmonicida (strain LFI1238) (Vibrio salmonicida (strain LFI1238)).